A 372-amino-acid polypeptide reads, in one-letter code: Serine proteinase inhibitor 1 (372 aa).

It belongs to the serpin family. Poxviruses subfamily.

It localises to the host cytoplasm. In terms of biological role, plays a role in mediating viral host range. May act to inhibit a caspase independent form of apoptosis to allow efficient virus replication in infected cells. The protein is Serine proteinase inhibitor 1 (OPG208) of Homo sapiens (Human).